We begin with the raw amino-acid sequence, 118 residues long: Large ribosomal subunit protein bL19 (118 aa).

It belongs to the bacterial ribosomal protein bL19 family.

In terms of biological role, this protein is located at the 30S-50S ribosomal subunit interface and may play a role in the structure and function of the aminoacyl-tRNA binding site. This is Large ribosomal subunit protein bL19 from Helicobacter hepaticus (strain ATCC 51449 / 3B1).